Consider the following 239-residue polypeptide: Uridylate kinase (239 aa).

Position 12-15 (12-15 (KLSG)) interacts with ATP. Residues 21–26 (GEQGFG) are involved in allosteric activation by GTP. Residue G55 coordinates UMP. ATP is bound by residues G56 and R60. Residues D75 and 136-143 (TGNPYFST) each bind UMP. ATP-binding residues include T163, Y169, and D172.

The protein belongs to the UMP kinase family. In terms of assembly, homohexamer.

It is found in the cytoplasm. It carries out the reaction UMP + ATP = UDP + ADP. It participates in pyrimidine metabolism; CTP biosynthesis via de novo pathway; UDP from UMP (UMPK route): step 1/1. Allosterically activated by GTP. Inhibited by UTP. In terms of biological role, catalyzes the reversible phosphorylation of UMP to UDP. The protein is Uridylate kinase of Koribacter versatilis (strain Ellin345).